We begin with the raw amino-acid sequence, 438 residues long: EF-hand calcium-binding domain-containing protein 3 (438 aa).

2 consecutive EF-hand domains span residues 47–82 (SQMR…LGMN) and 83–118 (LTKH…KNRF). Residues Asp-96, Asp-98, Asp-100, Lys-102, and Asp-107 each contribute to the Ca(2+) site. At Tyr-279 the chain carries Phosphotyrosine. The tract at residues 413–438 (SSSDISECDTDTGRKRKRKGFKGFRQ) is disordered. Over residues 426-438 (RKRKRKGFKGFRQ) the composition is skewed to basic residues.

The chain is EF-hand calcium-binding domain-containing protein 3 (EFCAB3) from Bos taurus (Bovine).